The primary structure comprises 358 residues: NADH-quinone oxidoreductase subunit H (358 aa).

Transmembrane regions (helical) follow at residues 20-40, 95-115, 128-148, 168-188, 206-226, 253-273, 290-310, and 334-354; these read ITVG…IPLI, ALFY…WAVI, IGLL…IIAG, ISYE…SGSM, VFSW…ISAV, GFAF…ISAL, WGFI…AVLY, and VLIP…ISPL.

This sequence belongs to the complex I subunit 1 family. NDH-1 is composed of 14 different subunits. Subunits NuoA, H, J, K, L, M, N constitute the membrane sector of the complex.

It is found in the cell inner membrane. It carries out the reaction a quinone + NADH + 5 H(+)(in) = a quinol + NAD(+) + 4 H(+)(out). Its function is as follows. NDH-1 shuttles electrons from NADH, via FMN and iron-sulfur (Fe-S) centers, to quinones in the respiratory chain. The immediate electron acceptor for the enzyme in this species is believed to be ubiquinone. Couples the redox reaction to proton translocation (for every two electrons transferred, four hydrogen ions are translocated across the cytoplasmic membrane), and thus conserves the redox energy in a proton gradient. This subunit may bind ubiquinone. The chain is NADH-quinone oxidoreductase subunit H from Neisseria meningitidis serogroup C (strain 053442).